Here is a 247-residue protein sequence, read N- to C-terminus: UPF0246 protein LSEI_2080 (247 aa).

Belongs to the UPF0246 family.

This Lacticaseibacillus paracasei (strain ATCC 334 / BCRC 17002 / CCUG 31169 / CIP 107868 / KCTC 3260 / NRRL B-441) (Lactobacillus paracasei) protein is UPF0246 protein LSEI_2080.